Here is a 250-residue protein sequence, read N- to C-terminus: Golgi SNAP receptor complex member 1 (250 aa).

An N-acetylalanine modification is found at alanine 2. The Cytoplasmic segment spans residues 2–229; it reads AAGTSSYWED…QRINLRKRRD (228 aa). The stretch at 9–30 forms a coiled coil; the sequence is WEDLRKQARQLENELDLKLVSF. The tract at residues 38 to 59 is disordered; it reads SHSSTRDGRRDRYSSDTTPLLN. The segment covering 41–51 has biased composition (basic and acidic residues); that stretch reads STRDGRRDRYS. Residues 68–95 adopt a coiled-coil conformation; it reads ETMAIEIEQLLARLTGVNDKMAEYTNSA. Residue serine 141 is modified to Phosphoserine. Residues 230 to 250 traverse the membrane as a helical; Anchor for type IV membrane protein segment; the sequence is SLILGGVIGICTILLLLYAFH.

This sequence belongs to the GOSR1 family. As to quaternary structure, component of several multiprotein Golgi SNARE complexes. Identified in a SNARE complex with BET1, STX5 and YKT6, in a SNARE complex with BET1L, STX5 and YKT6, in a SNARE complex with STX5, GOSR2, SEC22B and BET1, and in complex with STX5 and COG3. Interacts with GABARAPL2.

The protein resides in the golgi apparatus membrane. Its function is as follows. Involved in transport from the ER to the Golgi apparatus as well as in intra-Golgi transport. It belongs to a super-family of proteins called t-SNAREs or soluble NSF (N-ethylmaleimide-sensitive factor) attachment protein receptor. May play a protective role against hydrogen peroxide induced cytotoxicity under glutathione depleted conditions in neuronal cells by regulating the intracellular ROS levels via inhibition of p38 MAPK (MAPK11, MAPK12, MAPK13 and MAPK14). Participates in docking and fusion stage of ER to cis-Golgi transport. Plays an important physiological role in VLDL-transport vesicle-Golgi fusion and thus in VLDL delivery to the hepatic cis-Golgi. This is Golgi SNAP receptor complex member 1 (GOSR1) from Homo sapiens (Human).